The chain runs to 202 residues: uncharacterized protein (202 aa).

The interval 179 to 202 is disordered; sequence FDEQDSTPELPPNYLLDSQKKSQG.

This is an uncharacterized protein from Haemophilus influenzae (strain ATCC 51907 / DSM 11121 / KW20 / Rd).